Consider the following 137-residue polypeptide: Acidic phospholipase A2 PL-II (137 aa).

The signal sequence occupies residues 1–17 (AVCVSLLGASSIRPLPL). Cystine bridges form between C28/C89, C44/C136, C46/C62, C61/C117, C68/C110, C78/C103, and C96/C108. The Ca(2+) site is built by Y45, G47, and G49. H65 is a catalytic residue. D66 lines the Ca(2+) pocket. Residue D111 is part of the active site.

Ca(2+) is required as a cofactor. In terms of tissue distribution, expressed by the venom gland.

It is found in the secreted. The catalysed reaction is a 1,2-diacyl-sn-glycero-3-phosphocholine + H2O = a 1-acyl-sn-glycero-3-phosphocholine + a fatty acid + H(+). Its function is as follows. Snake venom phospholipase A2 (PLA2) that may act in the hemostasis system of the prey. Exhibits hydrolytic activities, and prefers the anionic micelles (dPPC with deoxycholate) (54 umol/mg/min) to the zwitterionic micelles (dPPC with Triton X-100) (15 umol/mg/min). PLA2 catalyzes the calcium-dependent hydrolysis of the 2-acyl groups in 3-sn-phosphoglycerides. The chain is Acidic phospholipase A2 PL-II from Walterinnesia aegyptia (Desert black snake).